Consider the following 312-residue polypeptide: Ribosomal protein L11 methyltransferase (312 aa).

Positions 160, 181, 203, and 246 each coordinate S-adenosyl-L-methionine.

It belongs to the methyltransferase superfamily. PrmA family.

The protein localises to the cytoplasm. The enzyme catalyses L-lysyl-[protein] + 3 S-adenosyl-L-methionine = N(6),N(6),N(6)-trimethyl-L-lysyl-[protein] + 3 S-adenosyl-L-homocysteine + 3 H(+). Its function is as follows. Methylates ribosomal protein L11. The protein is Ribosomal protein L11 methyltransferase of Staphylococcus aureus (strain COL).